We begin with the raw amino-acid sequence, 398 residues long: MSERVILAYSGGLDTSVAISWIGEETGREVVAVAIDLGQGGEDMEVVCQRALDCGAVEAVVVDARDEFAEGYCLPTILNNALYMDRYPLVSAISRPLIVKHLVEAAREHGGGIVAHGCTGKGNDQVRFEVGFASLAPDLEVLAPVRDYAWTREKAIAFAEENAIPINVTKRSPFSIDQNVWGRAVETGFLEHLWNAPTKDVYSYTEDPTVNWNTPDEVIVGFERGMPVSIDGNAVTMLQAIEELNRRAGAQGVGRLDVVEDRLVGIKSREIYEAPGAMVLITAHAELEHVTLERELARFKRHTDQRWAELVYDGLWYSPLKTALESFVAKTQEHVSGEIRLVLHGGHIAVNGRRSAESLYDFNLATYDEGDTFDQSAAKGFVYVHGLSSKLSARRDLQ.

Residue 8–16 coordinates ATP; sequence AYSGGLDTS. Residue tyrosine 87 participates in L-citrulline binding. Glycine 117 is a binding site for ATP. Residues threonine 119, asparagine 123, and aspartate 124 each contribute to the L-aspartate site. Asparagine 123 is a binding site for L-citrulline. Positions 127, 175, 260, and 272 each coordinate L-citrulline.

This sequence belongs to the argininosuccinate synthase family. Type 1 subfamily. In terms of assembly, homotetramer.

It is found in the cytoplasm. The enzyme catalyses L-citrulline + L-aspartate + ATP = 2-(N(omega)-L-arginino)succinate + AMP + diphosphate + H(+). Its pathway is amino-acid biosynthesis; L-arginine biosynthesis; L-arginine from L-ornithine and carbamoyl phosphate: step 2/3. The chain is Argininosuccinate synthase from Mycobacterium ulcerans (strain Agy99).